We begin with the raw amino-acid sequence, 419 residues long: Lipoyl synthase, mitochondrial (419 aa).

The N-terminal 26 residues, 1–26 (MAVCAGRLKCFGNPAVSLRTAASRAY), are a transit peptide targeting the mitochondrion. Residues 28–47 (TTTSPDPAIPSSSSASSSSA) are compositionally biased toward low complexity. The disordered stretch occupies residues 28–61 (TTTSPDPAIPSSSSASSSSALPKRPQTSFRDKLN). Positions 136, 141, 147, 167, 171, 174, and 382 each coordinate [4Fe-4S] cluster. The region spanning 150 to 371 (GSSKSAATAT…KDRALEMGFL (222 aa)) is the Radical SAM core domain. The interval 399–419 (AESTGPESTNVPNVTPDAIVR) is disordered.

Belongs to the radical SAM superfamily. Lipoyl synthase family. It depends on [4Fe-4S] cluster as a cofactor.

The protein localises to the mitochondrion. It catalyses the reaction [[Fe-S] cluster scaffold protein carrying a second [4Fe-4S](2+) cluster] + N(6)-octanoyl-L-lysyl-[protein] + 2 oxidized [2Fe-2S]-[ferredoxin] + 2 S-adenosyl-L-methionine + 4 H(+) = [[Fe-S] cluster scaffold protein] + N(6)-[(R)-dihydrolipoyl]-L-lysyl-[protein] + 4 Fe(3+) + 2 hydrogen sulfide + 2 5'-deoxyadenosine + 2 L-methionine + 2 reduced [2Fe-2S]-[ferredoxin]. The protein operates within protein modification; protein lipoylation via endogenous pathway; protein N(6)-(lipoyl)lysine from octanoyl-[acyl-carrier-protein]: step 2/2. In terms of biological role, catalyzes the radical-mediated insertion of two sulfur atoms into the C-6 and C-8 positions of the octanoyl moiety bound to the lipoyl domains of lipoate-dependent enzymes, thereby converting the octanoylated domains into lipoylated derivatives. In Coccidioides posadasii (strain C735) (Valley fever fungus), this protein is Lipoyl synthase, mitochondrial.